The sequence spans 336 residues: Casein kinase II subunit alpha (336 aa).

The Protein kinase domain occupies 37 to 322 (YQLVRKLGRG…AREAMAHPYF (286 aa)). ATP contacts are provided by residues 43–51 (LGRGKYSEV) and lysine 66. The Proton acceptor role is filled by aspartate 154.

This sequence belongs to the protein kinase superfamily. Ser/Thr protein kinase family. CK2 subfamily. In terms of assembly, tetramer of two alpha and two beta chains. Mg(2+) is required as a cofactor.

It is found in the nucleus. The protein localises to the nucleolus. It catalyses the reaction L-seryl-[protein] + ATP = O-phospho-L-seryl-[protein] + ADP + H(+). The enzyme catalyses L-threonyl-[protein] + ATP = O-phospho-L-threonyl-[protein] + ADP + H(+). Functionally, casein kinases are operationally defined by their preferential utilization of acidic proteins such as caseins as substrates. The alpha chain contains the catalytic site. May participate in Wnt signaling. The chain is Casein kinase II subunit alpha (CkIIalpha) from Drosophila melanogaster (Fruit fly).